Consider the following 217-residue polypeptide: Thymidylate kinase (217 aa).

An ATP-binding site is contributed by 7–14 (GIEGTGKT).

This sequence belongs to the thymidylate kinase family.

It catalyses the reaction dTMP + ATP = dTDP + ADP. Functionally, phosphorylation of dTMP to form dTDP in both de novo and salvage pathways of dTTP synthesis. The chain is Thymidylate kinase from Maridesulfovibrio salexigens (strain ATCC 14822 / DSM 2638 / NCIMB 8403 / VKM B-1763) (Desulfovibrio salexigens).